A 280-amino-acid polypeptide reads, in one-letter code: MTLRDHHFYNVTYTAYRLSPLFGFEYSNLTEIGKKLTRFLRYGTDRTGYFTNSTRFADLIIEKATFTEFGNTSSFPKFLKLDISYETSSDLEVKRKGQMFFFESFRKFSHAEADRTRLSLEGNSVFFSLALVRMDGALWMAVEQFLQQEFDTQILPCLIAPEILLEFLKIWQNHVNSQTALPLELTWTTGNPNLSSVTISIRPEDLKKIFRSSSFFYPILMEHIKRCTSLDLTNSVFSLSKVNTDCAILTSSGKLKIFSKAQNIVFDVLLALEPMQLPEY.

This sequence belongs to the CENP-L/IML3 family. Component of the inner kinetochore constitutive centromere-associated network (CCAN) (also known as central kinetochore Sim4 complex in fission yeast), which is composed of at least cnl2, cnp3, cnp20, fta1, fta2, fta3, fta4, fta6, fta7, mal2, mhf1, mhf2, mis6, mis15, mis17, sim4 and wip1.

Its subcellular location is the nucleus. It is found in the chromosome. The protein resides in the centromere. It localises to the kinetochore. Functionally, component of the kinetochore, a multiprotein complex that assembles on centromeric DNA and attaches chromosomes to spindle microtubules, mediating chromosome segregation and sister chromatid segregation during meiosis and mitosis. Component of the inner kinetochore constitutive centromere-associated network (CCAN), which serves as a structural platform for outer kinetochore assembly. This Schizosaccharomyces pombe (strain 972 / ATCC 24843) (Fission yeast) protein is Inner kinetochore subunit fta1 (fta1).